The primary structure comprises 156 residues: Small ribosomal subunit protein uS7 (156 aa).

It belongs to the universal ribosomal protein uS7 family. Part of the 30S ribosomal subunit. Contacts proteins S9 and S11.

In terms of biological role, one of the primary rRNA binding proteins, it binds directly to 16S rRNA where it nucleates assembly of the head domain of the 30S subunit. Is located at the subunit interface close to the decoding center, probably blocks exit of the E-site tRNA. The protein is Small ribosomal subunit protein uS7 of Shewanella baltica (strain OS223).